Reading from the N-terminus, the 132-residue chain is Insulin-like 3 (132 aa).

Positions 1-24 (MSPRPLAWALVLLGAALAVALALG) are cleaved as a signal peptide. Intrachain disulfides connect cysteine 36–cysteine 117, cysteine 48–cysteine 130, and cysteine 116–cysteine 121. Residues 61 to 104 (VAGGDRELLQWLEGRHLHGQVSDGDPMLVLVPQALPQASLHHHH) constitute a propeptide, c peptide like.

Belongs to the insulin family. Heterodimer of a B chain and an A chain linked by two disulfide bonds. More strongly expressed in testis than in ovary.

It is found in the secreted. Its function is as follows. Seems to play a role in testicular function. May be a trophic hormone with a role in testicular descent in fetal life. Is a ligand for LGR8 receptor. The chain is Insulin-like 3 (INSL3) from Canis lupus familiaris (Dog).